The sequence spans 299 residues: Cytosolic sulfotransferase 1 (299 aa).

Position 51 to 56 (51 to 56 (KAGTTW)) interacts with 3'-phosphoadenylyl sulfate. The active-site Proton acceptor is the histidine 113. 3'-phosphoadenylyl sulfate contacts are provided by residues arginine 135, serine 143, tyrosine 199, 233–238 (VQFDAM), and 261–263 (RKG).

The protein belongs to the sulfotransferase 1 family. In terms of tissue distribution, expressed in liver.

It localises to the cytoplasm. Inhibited by Co(2+), Zn(2+), Cd(2+) and Pb(2+) ions. Inactivated by Hg(2+) and Cu(2+) ions. In terms of biological role, sulfotransferase that utilizes 3'-phospho-5'-adenylyl sulfate (PAPS) as sulfonate donor to catalyze the sulfate conjugation of a variety of xenobiotic and endogenous compounds, including 2-naphthol, hydroxychlorobiphenyls, dopamine and T3 (triiodo-L-thyronine). The chain is Cytosolic sulfotransferase 1 from Danio rerio (Zebrafish).